The following is a 70-amino-acid chain: Large ribosomal subunit protein bL31 (70 aa).

Positions 16, 18, 37, and 40 each coordinate Zn(2+).

This sequence belongs to the bacterial ribosomal protein bL31 family. Type A subfamily. Part of the 50S ribosomal subunit. The cofactor is Zn(2+).

Binds the 23S rRNA. The chain is Large ribosomal subunit protein bL31 from Alteromonas mediterranea (strain DSM 17117 / CIP 110805 / LMG 28347 / Deep ecotype).